The sequence spans 107 residues: C-X-C motif chemokine 3 (107 aa).

The N-terminal stretch at 1-34 is a signal peptide; sequence MAHATLSAAPSNPRLLRVALLLLLLVAASRRAAG. Disulfide bonds link C43/C69 and C45/C85.

Belongs to the intercrine alpha (chemokine CxC) family. In terms of processing, N-terminal processed form GRO-gamma(5-73) is produced by proteolytic cleavage after secretion from peripheral blood monocytes.

It is found in the secreted. Its function is as follows. Ligand for CXCR2. Has chemotactic activity for neutrophils. May play a role in inflammation and exert its effects on endothelial cells in an autocrine fashion. In vitro, the processed form GRO-gamma(5-73) shows a fivefold higher chemotactic activity for neutrophilic granulocytes. The polypeptide is C-X-C motif chemokine 3 (CXCL3) (Homo sapiens (Human)).